The primary structure comprises 375 residues: Trans-enoyl reductase cghC (375 aa).

48–51 (VDTK) is a binding site for NADP(+). Residue 135-142 (NAWYTSGW) participates in substrate binding. Residues 188 to 191 (SSST), 211 to 214 (SARN), and 276 to 277 (LD) contribute to the NADP(+) site. 297-301 (GPELV) provides a ligand contact to substrate. 366 to 367 (VS) contributes to the NADP(+) binding site.

Belongs to the zinc-containing alcohol dehydrogenase family. Monomer.

The catalysed reaction is (2S,4S)-4-hydroxy-4-methylglutamate + 8 malonyl-CoA + 3 S-adenosyl-L-methionine + ATP + 8 NADPH + 11 H(+) = (2S)-3-[(2S)-3,5-dioxo-4-[(2E,4R,6R,8E,10E,12E)-4,6,12-trimethyltetradeca-2,8,10,12-tetraenoyl]pyrrolidin-2-yl]-2-hydroxy-2-methylpropanoate + AMP + 3 S-adenosyl-L-homocysteine + 8 CO2 + diphosphate + 8 NADP(+) + 8 CoA + 6 H2O. The protein operates within secondary metabolite biosynthesis. Its function is as follows. Trans-enoyl reductase; part of the gene cluster that mediates the biosynthesis of the tetramic acid Sch210972, a potential anti-HIV fungal natural product that contains a decalin core. The PKS module of cghG together with the enoylreductase cghC catalyze the formation of the polyketide unit which is then conjugated to 4-hydroxyl-4-methyl glutamate (HMG) by the condensation domain of the cghG NRPS module. One unique structural feature of Sch210972 is the tetramic acid motif proposed to be derived from the non-proteinogenic amino acid HMG, by a Dieckmann-type condensation catalyzed by the reductase domain of cghG. The aldolase cghB catalyzes the aldol condensation of 2 molecules of pyruvic acid to yield the intermediate 4-hydroxyl-4-methyl-2-oxoglutarate (HMOG), which can then be stereoselectively transaminated by an unidentified enzyme to form HMG. The Diels-Alderase cghA then uses the Dieckmann product released by cghG as substrate and catalyzes the Diels-Alder cycloaddition to form the decalin ring of Sch210972. CghA also suppresses the nonenzymatic formation of the alternative stereoisomer. This Chaetomium globosum (strain ATCC 6205 / CBS 148.51 / DSM 1962 / NBRC 6347 / NRRL 1970) (Soil fungus) protein is Trans-enoyl reductase cghC.